Reading from the N-terminus, the 465-residue chain is Light-independent protochlorophyllide reductase subunit N (465 aa).

[4Fe-4S] cluster-binding residues include cysteine 23, cysteine 48, and cysteine 108.

Belongs to the BchN/ChlN family. As to quaternary structure, protochlorophyllide reductase is composed of three subunits; ChlL, ChlN and ChlB. Forms a heterotetramer of two ChlB and two ChlN subunits. [4Fe-4S] cluster serves as cofactor.

The catalysed reaction is chlorophyllide a + oxidized 2[4Fe-4S]-[ferredoxin] + 2 ADP + 2 phosphate = protochlorophyllide a + reduced 2[4Fe-4S]-[ferredoxin] + 2 ATP + 2 H2O. It functions in the pathway porphyrin-containing compound metabolism; chlorophyll biosynthesis (light-independent). Functionally, component of the dark-operative protochlorophyllide reductase (DPOR) that uses Mg-ATP and reduced ferredoxin to reduce ring D of protochlorophyllide (Pchlide) to form chlorophyllide a (Chlide). This reaction is light-independent. The NB-protein (ChlN-ChlB) is the catalytic component of the complex. This is Light-independent protochlorophyllide reductase subunit N from Trichodesmium erythraeum (strain IMS101).